The sequence spans 291 residues: Quinol oxidase subunit 2 (291 aa).

The signal sequence occupies residues 1–28; sequence MQLKKAFWKLASLLPLSLLLFLGGCDKK. A run of 2 helical transmembrane segments spans residues 49 to 69 and 91 to 111; these read SFLL…VILI and LEII…IPTV.

This sequence belongs to the cytochrome c oxidase subunit 2 family.

Its subcellular location is the cell membrane. It carries out the reaction 2 a quinol + O2 = 2 a quinone + 2 H2O. In terms of biological role, catalyzes quinol oxidation with the concomitant reduction of oxygen to water. Subunit II transfers the electrons from a quinol to the binuclear center of the catalytic subunit I. This is Quinol oxidase subunit 2 from Bacillus cereus (strain ATCC 14579 / DSM 31 / CCUG 7414 / JCM 2152 / NBRC 15305 / NCIMB 9373 / NCTC 2599 / NRRL B-3711).